The chain runs to 255 residues: Glycerol-3-phosphate regulon repressor (255 aa).

The 56-residue stretch at 3 to 58 folds into the HTH deoR-type domain; sequence QSLRHQKIIKLVEQSGYLSTEELVAALDVSPQTIRRDLNILAELDLIRRHHGGAAS. The segment at residues 20 to 39 is a DNA-binding region (H-T-H motif); that stretch reads LSTEELVAALDVSPQTIRRD.

Its function is as follows. Repressor of the glycerol-3-phosphate regulon. The protein is Glycerol-3-phosphate regulon repressor (glpR) of Haemophilus influenzae (strain ATCC 51907 / DSM 11121 / KW20 / Rd).